The chain runs to 207 residues: Large ribosomal subunit protein uL4 (207 aa).

The tract at residues 48–86 (THKVKNRSEVRGGGRKPWRQKGTGRARQGSIRSPQWRGG) is disordered. Over residues 60–71 (GGRKPWRQKGTG) the composition is skewed to basic residues.

The protein belongs to the universal ribosomal protein uL4 family. In terms of assembly, part of the 50S ribosomal subunit.

Functionally, one of the primary rRNA binding proteins, this protein initially binds near the 5'-end of the 23S rRNA. It is important during the early stages of 50S assembly. It makes multiple contacts with different domains of the 23S rRNA in the assembled 50S subunit and ribosome. Forms part of the polypeptide exit tunnel. The sequence is that of Large ribosomal subunit protein uL4 from Bacillus licheniformis (strain ATCC 14580 / DSM 13 / JCM 2505 / CCUG 7422 / NBRC 12200 / NCIMB 9375 / NCTC 10341 / NRRL NRS-1264 / Gibson 46).